The chain runs to 132 residues: mRNA interferase toxin YafO (132 aa).

As to quaternary structure, probably forms a complex with the antitoxin YafN which inhibits the mRNA interferase activity.

Its function is as follows. Toxic component of a type II toxin-antitoxin (TA) system. A translation-dependent mRNA interferase. Overexpression causes cessation of cell growth and inhibits cell proliferation via inhibition of translation; this blockage is overcome by subsequent expression of antitoxin YafN. Overexpression causes cleavage of a number of mRNAs in a ribosome-dependent fashion. YafO binding to the 50S ribosomal subunit in the translation complex induces mRNA cleavage 3' to the region protected by the ribosome; YafO alone is not able to digest mRNA. The sequence is that of mRNA interferase toxin YafO (yafO) from Escherichia coli (strain K12).